Reading from the N-terminus, the 102-residue chain is Integration host factor subunit alpha (102 aa).

The disordered stretch occupies residues 49 to 71 (FGNFQLRTKPQRPGRNPKTGEEI).

Belongs to the bacterial histone-like protein family. As to quaternary structure, heterodimer of an alpha and a beta chain.

In terms of biological role, this protein is one of the two subunits of integration host factor, a specific DNA-binding protein that functions in genetic recombination as well as in transcriptional and translational control. This chain is Integration host factor subunit alpha, found in Nitrosomonas eutropha (strain DSM 101675 / C91 / Nm57).